A 430-amino-acid polypeptide reads, in one-letter code: Trigger factor (430 aa).

A PPIase FKBP-type domain is found at 163–248 (GDIAVIDFEG…LNSLKRKNMP (86 aa)).

It belongs to the FKBP-type PPIase family. Tig subfamily.

It is found in the cytoplasm. The catalysed reaction is [protein]-peptidylproline (omega=180) = [protein]-peptidylproline (omega=0). Involved in protein export. Acts as a chaperone by maintaining the newly synthesized protein in an open conformation. Functions as a peptidyl-prolyl cis-trans isomerase. This is Trigger factor from Brevibacillus brevis (strain 47 / JCM 6285 / NBRC 100599).